A 240-amino-acid polypeptide reads, in one-letter code: Biosynthetic peptidoglycan transglycosylase (240 aa).

A helical membrane pass occupies residues 12–31; that stretch reads ALMWFMVGSVLLVLLLRFVP.

The protein belongs to the glycosyltransferase 51 family.

The protein localises to the cell inner membrane. It catalyses the reaction [GlcNAc-(1-&gt;4)-Mur2Ac(oyl-L-Ala-gamma-D-Glu-L-Lys-D-Ala-D-Ala)](n)-di-trans,octa-cis-undecaprenyl diphosphate + beta-D-GlcNAc-(1-&gt;4)-Mur2Ac(oyl-L-Ala-gamma-D-Glu-L-Lys-D-Ala-D-Ala)-di-trans,octa-cis-undecaprenyl diphosphate = [GlcNAc-(1-&gt;4)-Mur2Ac(oyl-L-Ala-gamma-D-Glu-L-Lys-D-Ala-D-Ala)](n+1)-di-trans,octa-cis-undecaprenyl diphosphate + di-trans,octa-cis-undecaprenyl diphosphate + H(+). Its pathway is cell wall biogenesis; peptidoglycan biosynthesis. Functionally, peptidoglycan polymerase that catalyzes glycan chain elongation from lipid-linked precursors. In Pseudomonas fluorescens (strain ATCC BAA-477 / NRRL B-23932 / Pf-5), this protein is Biosynthetic peptidoglycan transglycosylase.